The primary structure comprises 165 residues: Methylated-DNA--protein-cysteine methyltransferase (165 aa).

Cysteine 126 serves as the catalytic Nucleophile; methyl group acceptor.

This sequence belongs to the MGMT family.

The protein resides in the cytoplasm. The catalysed reaction is a 6-O-methyl-2'-deoxyguanosine in DNA + L-cysteinyl-[protein] = S-methyl-L-cysteinyl-[protein] + a 2'-deoxyguanosine in DNA. It carries out the reaction a 4-O-methyl-thymidine in DNA + L-cysteinyl-[protein] = a thymidine in DNA + S-methyl-L-cysteinyl-[protein]. In terms of biological role, involved in the cellular defense against the biological effects of O6-methylguanine (O6-MeG) and O4-methylthymine (O4-MeT) in DNA. Repairs the methylated nucleobase in DNA by stoichiometrically transferring the methyl group to a cysteine residue in the enzyme. This is a suicide reaction: the enzyme is irreversibly inactivated. This chain is Methylated-DNA--protein-cysteine methyltransferase, found in Mycobacterium leprae (strain TN).